Here is a 313-residue protein sequence, read N- to C-terminus: Synaptophysin (313 aa).

The Cytoplasmic portion of the chain corresponds to 1–25 (MLLLADMDVVNQLVAGGQFRVVKEP). An MARVEL domain is found at 21 to 227 (VVKEPLGFVK…NLWFVFKETG (207 aa)). Residues 26-49 (LGFVKVLQWVFAIFAFATCGSYSG) traverse the membrane as a helical segment. At 50–106 (ELQLSVDCANKTKSDLNIEVEFEYPFRLHEVYFEAPTCQGDPKKIFLVGNYSSSAEF) the chain is on the vesicular side. Asn-59 carries N-linked (GlcNAc...) asparagine glycosylation. Tyr-81 bears the Phosphotyrosine mark. Asn-99 is a glycosylation site (N-linked (GlcNAc...) asparagine). The chain crosses the membrane as a helical span at residues 107 to 130 (FVTVAVFAFLYSMGALATYIFLQN). At 131-137 (KYRENNK) the chain is on the cytoplasmic side. The helical transmembrane segment at 138–161 (GPMLDFLATAVFAFMWLVSSSAWA) threads the bilayer. Residues 162 to 199 (KGLSDVKMATDPENIIKGMHVCHQPGNTCKELRDPVTS) are Vesicular-facing. A helical membrane pass occupies residues 200–223 (GLNTSVVFGFLNLVLWVGNLWFVF). At 224–313 (KETGWAAPFL…GAPTSFSNQM (90 aa)) the chain is on the cytoplasmic side. Positions 238 to 313 (GAPEKQPAPG…GAPTSFSNQM (76 aa)) are disordered. The span at 253-263 (AGYGQGPGGYG) shows a compositional bias: gly residues. A repeats, Gly/Tyr-rich region spans residues 254–304 (GYGQGPGGYGPQDSYGPQGGYQPDYGQPASSGGGGYGPQGDYGQQGYGPQG). The segment covering 264–283 (PQDSYGPQGGYQPDYGQPAS) has biased composition (low complexity). Over residues 284–302 (SGGGGYGPQGDYGQQGYGP) the composition is skewed to gly residues.

Belongs to the synaptophysin/synaptobrevin family. As to quaternary structure, homohexamer or homotetramer. Interacts with SRCIN1. Interacts with VAMP2; the interaction is inhibited by interaction of VAPM2 with SEPT8. Ubiquitinated; mediated by SIAH1 or SIAH2 and leading to its subsequent proteasomal degradation. Post-translationally, phosphorylated by SRC. Characteristic of a type of small (30-80 nm) neurosecretory vesicles, including presynaptic vesicles, but also vesicles of various neuroendocrine cells of both neuronal and epithelial phenotype.

It localises to the cytoplasmic vesicle. The protein resides in the secretory vesicle. Its subcellular location is the synaptic vesicle membrane. It is found in the synapse. The protein localises to the synaptosome. Functionally, possibly involved in structural functions as organizing other membrane components or in targeting the vesicles to the plasma membrane. Involved in the regulation of short-term and long-term synaptic plasticity. This is Synaptophysin (SYP) from Bos taurus (Bovine).